Reading from the N-terminus, the 80-residue chain is Large ribosomal subunit protein bL31B (80 aa).

The protein belongs to the bacterial ribosomal protein bL31 family. Type B subfamily. Part of the 50S ribosomal subunit.

The polypeptide is Large ribosomal subunit protein bL31B (Shouchella clausii (strain KSM-K16) (Alkalihalobacillus clausii)).